The sequence spans 332 residues: Ribosomal RNA small subunit methyltransferase H (332 aa).

S-adenosyl-L-methionine-binding positions include 38 to 40 (GGY), Asp56, Phe83, Asp104, and Gln111. Residues 309–332 (TETPFSEDISRPDTHIPRSRRQSA) are disordered.

This sequence belongs to the methyltransferase superfamily. RsmH family.

The protein resides in the cytoplasm. It carries out the reaction cytidine(1402) in 16S rRNA + S-adenosyl-L-methionine = N(4)-methylcytidine(1402) in 16S rRNA + S-adenosyl-L-homocysteine + H(+). In terms of biological role, specifically methylates the N4 position of cytidine in position 1402 (C1402) of 16S rRNA. This Zymomonas mobilis subsp. mobilis (strain ATCC 31821 / ZM4 / CP4) protein is Ribosomal RNA small subunit methyltransferase H.